A 391-amino-acid polypeptide reads, in one-letter code: Ammonium transporter Amt1 (391 aa).

At 1–7 (MSDGNVA) the chain is on the extracellular side. The chain crosses the membrane as a helical span at residues 8–27 (WILASTALVMLMVPGVGFFY). The Cytoplasmic segment spans residues 28–38 (AGMVRRKNAVN). The helical transmembrane segment at 39 to 57 (MIALSFISLIITVLLWIFY) threads the bilayer. Residues 58–89 (GYSVSFGNDISGIIGGLNYALLSGVKGEDLLF) are Extracellular-facing. A helical membrane pass occupies residues 90–106 (MMYQMMFAAVTIAILTS). The Cytoplasmic segment spans residues 107 to 113 (AIAERAK). A helical membrane pass occupies residues 114–137 (VSSFILLSALWLTFVYAPFAHWLW). Residues 138-152 (GGGWLAKLGALDFAG) are Extracellular-facing. A helical membrane pass occupies residues 153-170 (GMVVHISSGFAALAVAMT). The Cytoplasmic segment spans residues 171–188 (IGKRAGFEEYSIEPHSIP). Residues 189–208 (LTLIGAALLWFGWFGFNGGS) form a helical membrane-spanning segment. Residues 209–217 (ALAANDVAI) are Extracellular-facing. The helical transmembrane segment at 218 to 237 (NAVVVTNTSAAVAGFVWMVI) threads the bilayer. Over 238 to 245 (GWIKGKPG) the chain is Cytoplasmic. Residues 246 to 263 (SLGIVSGAIAGLAAITPA) form a helical membrane-spanning segment. The Extracellular segment spans residues 264 to 268 (AGFVD). The chain crosses the membrane as a helical span at residues 269 to 287 (VKGAIVIGLVAGIVCYLAM). Topologically, residues 288-300 (DFRIKKKIDESLD) are cytoplasmic. The helical transmembrane segment at 301–319 (AWAIHGIGGLWGSVAVGIL) threads the bilayer. Over 320–337 (ANPEVNGYAGLLFGNPQL) the chain is Extracellular. Residues 338 to 363 (LVSQLIAVASTTAYAFLVTLILAKAV) form a helical membrane-spanning segment. The Cytoplasmic segment spans residues 364–391 (DAAVGLRVSSQEEYVGLDLSQHEEVAYT).

This sequence belongs to the ammonia transporter channel (TC 1.A.11.2) family. In terms of assembly, homotrimer.

It is found in the cell membrane. In terms of biological role, involved in the uptake of ammonium/ammonia (NH(4)(+)/NH(3)). Transport is electrogenic. Transport the ammonium and methylammonium cation with high specificity. The sequence is that of Ammonium transporter Amt1 from Archaeoglobus fulgidus (strain ATCC 49558 / DSM 4304 / JCM 9628 / NBRC 100126 / VC-16).